A 590-amino-acid chain; its full sequence is UvrABC system protein C (590 aa).

The region spanning 14 to 91 is the GIY-YIG domain; the sequence is DQPGCYLMKD…IKKYDPKYNV (78 aa). One can recognise a UVR domain in the interval 196 to 231; it reads NEIKKELEAKMAEAAEKLEFERAKEFRDQLAHIEST.

The protein belongs to the UvrC family. Interacts with UvrB in an incision complex.

It is found in the cytoplasm. Its function is as follows. The UvrABC repair system catalyzes the recognition and processing of DNA lesions. UvrC both incises the 5' and 3' sides of the lesion. The N-terminal half is responsible for the 3' incision and the C-terminal half is responsible for the 5' incision. This Bacillus velezensis (strain DSM 23117 / BGSC 10A6 / LMG 26770 / FZB42) (Bacillus amyloliquefaciens subsp. plantarum) protein is UvrABC system protein C.